Consider the following 394-residue polypeptide: uncharacterized protein (394 aa).

4 N-linked (GlcNAc...) asparagine glycosylation sites follow: N3, N14, N20, and N25. Transmembrane regions (helical) follow at residues 64–84 (AVGIVTACFCFFLIPLLLVNI), 101–121 (FIWITLLILALAVGGFAYIDV), 133–153 (IFSFTFQTALPISIAIIWHVI), 180–200 (IFVVEYYAPIVFYVFNLMGFF), 228–248 (VLLAIAWVFACAMFIVYSFVY), and 256–276 (WVGMVIMMISILPRIVYQFLE). Residues N283 and N286 are each glycosylated (N-linked (GlcNAc...) asparagine). The chain crosses the membrane as a helical span at residues 291-311 (AGLVFGLGFCPPLILAYTVCI). Residue N344 is glycosylated (N-linked (GlcNAc...) asparagine).

It localises to the membrane. This is an uncharacterized protein from Schizosaccharomyces pombe (strain 972 / ATCC 24843) (Fission yeast).